The following is a 329-amino-acid chain: Glycerol-3-phosphate dehydrogenase [NAD(P)+] (329 aa).

Tryptophan 11, arginine 30, and lysine 103 together coordinate NADPH. Residues lysine 103, glycine 132, and serine 134 each coordinate sn-glycerol 3-phosphate. NADPH is bound at residue alanine 136. Sn-glycerol 3-phosphate contacts are provided by lysine 187, aspartate 240, serine 250, arginine 251, and asparagine 252. The active-site Proton acceptor is the lysine 187. Arginine 251 is a binding site for NADPH. 2 residues coordinate NADPH: valine 275 and glutamate 277.

Belongs to the NAD-dependent glycerol-3-phosphate dehydrogenase family.

Its subcellular location is the cytoplasm. It catalyses the reaction sn-glycerol 3-phosphate + NAD(+) = dihydroxyacetone phosphate + NADH + H(+). It carries out the reaction sn-glycerol 3-phosphate + NADP(+) = dihydroxyacetone phosphate + NADPH + H(+). It functions in the pathway membrane lipid metabolism; glycerophospholipid metabolism. Functionally, catalyzes the reduction of the glycolytic intermediate dihydroxyacetone phosphate (DHAP) to sn-glycerol 3-phosphate (G3P), the key precursor for phospholipid synthesis. The protein is Glycerol-3-phosphate dehydrogenase [NAD(P)+] of Dechloromonas aromatica (strain RCB).